The sequence spans 76 residues: DNA polymerase III subunit theta (76 aa).

As to quaternary structure, the DNA polymerase holoenzyme is a complex that contains 10 different types of subunits. These subunits are organized into 3 functionally essential subassemblies: the pol III core, the beta sliding clamp processivity factor and the clamp-loading complex. The pol III core (subunits alpha,epsilon and theta) contains the polymerase and the 3'-5' exonuclease proofreading activities. The polymerase is tethered to the template via the sliding clamp processivity factor. The clamp-loading complex assembles the beta processivity factor onto the primer template and plays a central role in the organization and communication at the replication fork. This complex contains delta, delta', psi and chi, and copies of either or both of two different DnaX proteins, gamma and tau. The composition of the holoenzyme is, therefore: (alpha,epsilon,theta)[2]-(gamma/tau)[3]-delta,delta', psi,chi-beta[4].

The enzyme catalyses DNA(n) + a 2'-deoxyribonucleoside 5'-triphosphate = DNA(n+1) + diphosphate. DNA polymerase III is a complex, multichain enzyme responsible for most of the replicative synthesis in bacteria. This DNA polymerase also exhibits 3' to 5' exonuclease activity. Its function is as follows. The exact function of the theta subunit is unknown. The protein is DNA polymerase III subunit theta (holE) of Escherichia coli O157:H7.